The primary structure comprises 477 residues: UTP--glucose-1-phosphate uridylyltransferase (477 aa).

At A2 the chain carries N-acetylalanine. UTP is bound by residues 92–95, K106, Q169, and G198; that span reads LNGG. A substrate-binding site is contributed by 94-95; that stretch reads GG. Substrate contacts are provided by residues H199 and 227-229; that span reads NSD. UTP contacts are provided by D229 and K367.

This sequence belongs to the UDPGP type 1 family. In terms of assembly, monomer. The cofactor is Mg(2+).

The protein localises to the cytoplasm. It carries out the reaction alpha-D-glucose 1-phosphate + UTP + H(+) = UDP-alpha-D-glucose + diphosphate. With respect to regulation, inhibition by uncomplexed, free UTP. Functionally, plays a central role as a glucosyl donor in cellular metabolic pathways. The sequence is that of UTP--glucose-1-phosphate uridylyltransferase from Solanum tuberosum (Potato).